A 675-amino-acid polypeptide reads, in one-letter code: Methionine--tRNA ligase (675 aa).

The short motif at 15-25 (PYANGPIHLGH) is the 'HIGH' region element. The Zn(2+) site is built by Cys-146, Cys-149, Cys-159, and Cys-162. The 'KMSKS' region motif lies at 332 to 336 (KMSKS). Lys-335 contacts ATP. The region spanning 573–675 (DFAKVDMRVA…SGAQPGMQVK (103 aa)) is the tRNA-binding domain.

It belongs to the class-I aminoacyl-tRNA synthetase family. MetG type 1 subfamily. As to quaternary structure, homodimer. Zn(2+) serves as cofactor.

The protein localises to the cytoplasm. The enzyme catalyses tRNA(Met) + L-methionine + ATP = L-methionyl-tRNA(Met) + AMP + diphosphate. Is required not only for elongation of protein synthesis but also for the initiation of all mRNA translation through initiator tRNA(fMet) aminoacylation. In Photorhabdus laumondii subsp. laumondii (strain DSM 15139 / CIP 105565 / TT01) (Photorhabdus luminescens subsp. laumondii), this protein is Methionine--tRNA ligase.